Consider the following 345-residue polypeptide: NADH-ubiquinone oxidoreductase chain 2 (345 aa).

A run of 10 helical transmembrane segments spans residues 1 to 21 (MNPLINFILLSSMIAGTILTT), 26 to 46 (WVSAWLGLELNTLAIIPIISM), 60 to 80 (FLIQAASSALVLLSGIINAHL), 96 to 115 (IALTTALATKLGLAPIHFWL), 122 to 144 (VPILTALIIATWQKIAPMALLIM), 148 to 170 (LIPTPITLIMGLTSTIVGGLGGL), 201 to 223 (TLLNLILYIPMTSLTMLIMHLTM), 242 to 262 (SLFLLSLLSLGGLPPLSGFIP), 274 to 294 (NLTPMAFMMAITALLSLMFYL), and 323 to 343 (TSTLPLLSLISIFLLPITPTL).

It belongs to the complex I subunit 2 family.

It is found in the mitochondrion inner membrane. It carries out the reaction a ubiquinone + NADH + 5 H(+)(in) = a ubiquinol + NAD(+) + 4 H(+)(out). Functionally, core subunit of the mitochondrial membrane respiratory chain NADH dehydrogenase (Complex I) that is believed to belong to the minimal assembly required for catalysis. Complex I functions in the transfer of electrons from NADH to the respiratory chain. The immediate electron acceptor for the enzyme is believed to be ubiquinone. In Varanus nebulosus (Clouded monitor), this protein is NADH-ubiquinone oxidoreductase chain 2 (MT-ND2).